The sequence spans 90 residues: Small ribosomal subunit protein bS20 (90 aa).

Over residues 1-10 the composition is skewed to polar residues; sequence MANHKSTQKS. Positions 1 to 25 are disordered; that stretch reads MANHKSTQKSIRQDQKRNLINKSRK.

Belongs to the bacterial ribosomal protein bS20 family.

Its function is as follows. Binds directly to 16S ribosomal RNA. The sequence is that of Small ribosomal subunit protein bS20 from Orientia tsutsugamushi (strain Boryong) (Rickettsia tsutsugamushi).